A 605-amino-acid chain; its full sequence is Capsid scaffolding protein (605 aa).

Active-site charge relay system residues include H52, S120, and H139. The segment at 326–344 (GEFVLIPTAYYSQLLTGQT) is interaction with pAP. Positions 585 to 605 (IQGSTADDADMFANQMMVGRC) are interaction with major capsid protein.

The protein belongs to the herpesviridae capsid scaffolding protein family. Homomultimer. Interacts with major capsid protein. In terms of assembly, exists in a monomer-dimer equilibrium with the dimer being the active species. Capsid scaffolding protein is cleaved by assemblin after formation of the spherical procapsid. As a result, the capsid obtains its mature, icosahedral shape. Cleavages occur at two or more sites: release (R-site) and maturation (M-site).

Its subcellular location is the host cytoplasm. It localises to the host nucleus. It catalyses the reaction Cleaves -Ala-|-Ser- and -Ala-|-Ala- bonds in the scaffold protein.. Functionally, acts as a scaffold protein by binding major capsid protein in the cytoplasm, inducing the nuclear localization of both proteins. Multimerizes in the nucleus such as major capsid protein forms the icosahedral T=16 capsid. Autocatalytic cleavage releases the assembly protein, and subsequently abolishes interaction with major capsid protein. Cleavages products are evicted from the capsid before or during DNA packaging. Protease that plays an essential role in virion assembly within the nucleus. Catalyzes the cleavage of the assembly protein after formation of the spherical procapsid. By that cleavage, the capsid matures and gains its icosahedral shape. The cleavage sites seem to include -Ala-Ser-, -Ala-Ala-, as well as Ala-Thr bonds. Assemblin and cleavages products are evicted from the capsid before or during DNA packaging. Its function is as follows. Plays a major role in capsid assembly. Acts as a scaffold protein by binding major capsid protein. Multimerizes in the nucleus such as major capsid protein forms the icosahedral T=16 capsid. Cleaved by assemblin after capsid completion. The cleavages products are evicted from the capsid before or during DNA packaging. The polypeptide is Capsid scaffolding protein (33) (Varicella-zoster virus (strain Dumas) (HHV-3)).